We begin with the raw amino-acid sequence, 426 residues long: Mediator of RNA polymerase II transcription subunit 4 (426 aa).

A disordered region spans residues 1–56 (MLQHQIVQSPARLGLTGPGSPSVQNPTPTRHGHPTSSSSSQSQHQQIQQQPNLLPS). Positions 19–28 (GSPSVQNPTP) are enriched in polar residues. The span at 36 to 56 (SSSSSQSQHQQIQQQPNLLPS) shows a compositional bias: low complexity. A coiled-coil region spans residues 160–212 (TELQEILDLQDAKQKVAREIKSKDSSLLAFANKLKDAERVLDMLVDDYSDYRK). Disordered regions lie at residues 214–236 (KRSKIEEDDEDNDNESSSSSTTV) and 373–426 (IAAP…DDED). Positions 406–426 (ILEDDDSSDYSSDDASSDDED) are enriched in acidic residues.

The protein belongs to the Mediator complex subunit 4 family. Component of the Mediator complex.

It is found in the nucleus. Component of the Mediator complex, a coactivator involved in the regulated transcription of nearly all RNA polymerase II-dependent genes. Mediator functions as a bridge to convey information from gene-specific regulatory proteins to the basal RNA polymerase II transcription machinery. The Mediator complex, having a compact conformation in its free form, is recruited to promoters by direct interactions with regulatory proteins and serves for the assembly of a functional preinitiation complex with RNA polymerase II and the general transcription factors. The protein is Mediator of RNA polymerase II transcription subunit 4 (MED4) of Arabidopsis thaliana (Mouse-ear cress).